A 462-amino-acid polypeptide reads, in one-letter code: Argininosuccinate lyase (462 aa).

It belongs to the lyase 1 family. Argininosuccinate lyase subfamily.

Its subcellular location is the cytoplasm. It carries out the reaction 2-(N(omega)-L-arginino)succinate = fumarate + L-arginine. The protein operates within amino-acid biosynthesis; L-arginine biosynthesis; L-arginine from L-ornithine and carbamoyl phosphate: step 3/3. In Nitratiruptor sp. (strain SB155-2), this protein is Argininosuccinate lyase.